A 112-amino-acid polypeptide reads, in one-letter code: UPF0342 protein SPP_1392 (112 aa).

It belongs to the UPF0342 family.

The sequence is that of UPF0342 protein SPP_1392 from Streptococcus pneumoniae (strain P1031).